The primary structure comprises 148 residues: uncharacterized protein (148 aa).

This is an uncharacterized protein from Methanothermobacter thermautotrophicus (Methanobacterium thermoformicicum).